The following is a 412-amino-acid chain: Argininosuccinate synthase (412 aa).

Residues 10–18 (AYSGGLDTS) and A36 contribute to the ATP site. Residues Y87 and S92 each contribute to the L-citrulline site. Phosphotyrosine is present on Y87. K112 is modified (N6-acetyllysine). A Phosphotyrosine modification is found at Y113. 115–123 (SHGATGKGN) is an ATP binding site. The L-aspartate site is built by T119, N123, and D124. L-citrulline is bound at residue N123. R127 contacts L-citrulline. Residues K165 and K176 each carry the N6-acetyllysine; by CLOCK modification. Residues S177 and S180 each carry the phosphoserine modification. Positions 180 and 189 each coordinate L-citrulline. S219 is subject to Phosphoserine. E270 and Y282 together coordinate L-citrulline.

It belongs to the argininosuccinate synthase family. Type 1 subfamily. In terms of assembly, homotetramer. Interacts with NMRAL1. Interacts with CLOCK; in a circadian manner. Forms tissue-specific complexes with ASL, SLC7A1, HSP90AA1 and nitric oxide synthase NOS1, NOS2 or NOS3; the complex regulates cell-autonomous L-arginine synthesis and citrulline recycling while channeling extracellular L-arginine to nitric oxide synthesis pathway. In terms of processing, acetylated by CLOCK in a circadian manner which negatively regulates its enzyme activity. Deacetylated by histone deacetylases. Widely expressed.

It localises to the cytoplasm. Its subcellular location is the cytosol. It carries out the reaction L-citrulline + L-aspartate + ATP = 2-(N(omega)-L-arginino)succinate + AMP + diphosphate + H(+). Its pathway is amino-acid biosynthesis; L-arginine biosynthesis; L-arginine from L-ornithine and carbamoyl phosphate: step 2/3. It participates in nitrogen metabolism; urea cycle; (N(omega)-L-arginino)succinate from L-aspartate and L-citrulline: step 1/1. In terms of biological role, one of the enzymes of the urea cycle, the metabolic pathway transforming neurotoxic amonia produced by protein catabolism into inocuous urea in the liver of ureotelic animals. Catalyzes the formation of arginosuccinate from aspartate, citrulline and ATP and together with ASL it is responsible for the biosynthesis of arginine in most body tissues. This is Argininosuccinate synthase from Mus musculus (Mouse).